Consider the following 814-residue polypeptide: Coiled-coil and C2 domain-containing protein 1-like (814 aa).

Residues 1 to 11 (MFAKRKPEPAK) show a composition bias toward basic and acidic residues. 2 disordered regions span residues 1 to 136 (MFAK…TFLP) and 157 to 263 (EANA…RSRQ). Acidic residues predominate over residues 25-47 (IPDDFDPTSGYGDDDGGDSDLEA). The span at 73–85 (DLDKMIADSLRDV) shows a compositional bias: basic and acidic residues. 2 stretches are compositionally biased toward acidic residues: residues 86–100 (SDDDDDENLENDSDL) and 110–130 (LEEEPEAEEAAAEPAASEEEP). The interval 143-201 (LGIIKQRLEIYKQAEANAKASGDSGKARRFGRGLKTLQDLHKQAAAGKTINVDDIPPEV) is DM14 1. Residues 205 to 230 (PAGDPSPAADESPAPSTPVSQPTRVA) are compositionally biased toward low complexity. Positions 231 to 254 (PAPPTPTSPPAATPPPAPATPPNP) are enriched in pro residues. DM14 regions lie at residues 256–314 (VAQM…PPPP) and 358–416 (LEAL…PVPP). Residues 351 to 378 (AAAAESMLEALQRRLEKYKSVEAAAKAE) are a coiled coil. Positions 414 to 425 (VPPGFGPLPSTE) are enriched in pro residues. Residues 414-486 (VPPGFGPLPS…LTTRVTGNHQ (73 aa)) are disordered. Positions 426 to 462 (PAPAATPSLPTSPTSPPATASTSAGGTPSGSSATTPT) are enriched in low complexity. Over residues 475–486 (TELTTRVTGNHQ) the composition is skewed to polar residues. Residues 495-553 (MKLLLERQKEFKVAAIEAKKAGEIDQAKEYLKIYKGFDSLLNAASSGLPVDLSTLPVPP) form a DM14 4 region. Residues 633–772 (RKGQPLPKFH…ETKCDIHDTY (140 aa)) form the C2 domain.

It belongs to the CC2D1 family. Interacts (via DM14 domains 1 and 3) with shrb; the interaction is direct and blocks access to the surface involved in shrb polymerization. This interaction may be required for the ESCRT-III complex role in multivesicular body formation.

The protein resides in the cytoplasm. The protein localises to the cytosol. It localises to the apicolateral cell membrane. It is found in the cell cortex. Its subcellular location is the endosome. Its function is as follows. Phosphatidyl inositol monophosphate binding protein involved in endosomal protein sorting through regulation of the endosomal sorting required for transport (ESCRT) pathway. Required for full activity of the ESCRT-III complex core component shrb/shrub, probably by preventing its inappropriate polymerisation. Required, but not essential, for the efficient generation of intraluminal vesicles (ILVs) in multivesicular bodies (MVBs). Involved in a late stage of the endosomal pathway targeting transmembrane proteins of the plasma membrane for lysosomal degradation. Plays a critical role in regulation of multiple signal transduction pathways, including the Notch and BMP/decapentaplegic (dpp) signaling pathways, through targeting of membrane bound receptors to multivesicular bodies, isolating them from the cytoplasm and targeting them for lysosomal degradation. Involved in targeting N/Notch for endosomal degradation, negatively regulating the Notch signaling pathway. Regulates Notch signaling in imaginal disk cells and follicle cells during oogenesis and multiple developmental processes, including development of wings, veins, legs, eyes and bristles. Restricts the activity of Notch to the dorsoventral (D/V) boundary of the wing imaginal disk. In external sensory organ development regulates Notch signaling during asymmetric cell division and differentiation of sensory organ precursor cells. May be involved in regulation of apoptosis and cell growth independent of Notch signaling. Involved in targeting tkv for endosomal degradation, negatively regulating the BMP/decapentaplegic (dpp) signaling pathway. Regulates the BMP/dpp signaling pathway in follicle cells during oogenesis, but not in imaginal disk cells during wing development. May be involved in differentiation or morphogenesis of peripodial epithelial cells in the developing imaginal disk. Involved in abscission of germline cells during oogenesis. This chain is Coiled-coil and C2 domain-containing protein 1-like, found in Drosophila pseudoobscura pseudoobscura (Fruit fly).